The chain runs to 714 residues: DNA ligase (714 aa).

Residues 40–44 (DADYD), 90–91 (SL), and glutamate 124 contribute to the NAD(+) site. Catalysis depends on lysine 126, which acts as the N6-AMP-lysine intermediate. Arginine 147, glutamate 183, lysine 304, and lysine 328 together coordinate NAD(+). The Zn(2+) site is built by cysteine 420, cysteine 423, cysteine 438, and cysteine 444. Residues 634–714 (TRDSEVSGKT…EWAAIVAAAG (81 aa)) enclose the BRCT domain.

The protein belongs to the NAD-dependent DNA ligase family. LigA subfamily. Requires Mg(2+) as cofactor. It depends on Mn(2+) as a cofactor.

The enzyme catalyses NAD(+) + (deoxyribonucleotide)n-3'-hydroxyl + 5'-phospho-(deoxyribonucleotide)m = (deoxyribonucleotide)n+m + AMP + beta-nicotinamide D-nucleotide.. In terms of biological role, DNA ligase that catalyzes the formation of phosphodiester linkages between 5'-phosphoryl and 3'-hydroxyl groups in double-stranded DNA using NAD as a coenzyme and as the energy source for the reaction. It is essential for DNA replication and repair of damaged DNA. This Sphingopyxis alaskensis (strain DSM 13593 / LMG 18877 / RB2256) (Sphingomonas alaskensis) protein is DNA ligase.